Here is a 504-residue protein sequence, read N- to C-terminus: Acid phosphatase A (504 aa).

The first 22 residues, 1 to 22 (MYTLLDILKGLPLLAVAAIASA), serve as a signal peptide directing secretion. Residues Asn-84, Asn-112, Asn-168, Asn-260, Asn-415, Asn-450, and Asn-474 are each glycosylated (N-linked (GlcNAc...) asparagine).

The protein belongs to the metallophosphoesterase superfamily. Purple acid phosphatase family. As to quaternary structure, monomer.

The protein localises to the secreted. It catalyses the reaction a phosphate monoester + H2O = an alcohol + phosphate. Its function is as follows. Acid phosphatase involved in the regulation of fungal phenotypic traits and virulence in C.parasitica. The polypeptide is Acid phosphatase A (Cryphonectria parasitica (strain ATCC 38755 / EP155)).